Reading from the N-terminus, the 580-residue chain is Laccase-20 (580 aa).

The signal sequence occupies residues 1-23; it reads MVASLLCTVAVAVLAVAAVGGEA. Plastocyanin-like domains are found at residues 31-147 and 156-310; these read VVHE…PRDG and KDVP…YTSA. N-linked (GlcNAc...) asparagine glycosylation is found at asparagine 36 and asparagine 42. Cu cation-binding residues include histidine 81 and histidine 83. N-linked (GlcNAc...) asparagine glycosylation occurs at asparagine 115. Histidine 126 and histidine 128 together coordinate Cu cation. 5 N-linked (GlcNAc...) asparagine glycosylation sites follow: asparagine 200, asparagine 339, asparagine 392, asparagine 429, and asparagine 460. The Plastocyanin-like 3 domain occupies 419-561; that stretch reads DFPVRPPRPY…ATAFIVEDGP (143 aa). 8 residues coordinate Cu cation: asparagine 478, histidine 481, histidine 483, histidine 540, cysteine 541, histidine 542, histidine 546, and methionine 551. Residues 560-580 are disordered; sequence GPTPETSLPPPPPEFKRCDAS.

The protein belongs to the multicopper oxidase family. The cofactor is Cu cation.

It is found in the secreted. Its subcellular location is the extracellular space. The protein localises to the apoplast. The enzyme catalyses 4 hydroquinone + O2 = 4 benzosemiquinone + 2 H2O. Functionally, lignin degradation and detoxification of lignin-derived products. The chain is Laccase-20 (LAC20) from Oryza sativa subsp. indica (Rice).